Here is a 23-residue protein sequence, read N- to C-terminus: Basic phospholipase A2 homolog Vur-S49 analog (23 aa).

A disordered region spans residues 1-23; that stretch reads SVLEIGLMLQEETEKNPKTSYSI.

Contains 7 disulfide bonds. Expressed by the venom gland.

Its subcellular location is the secreted. In Vipera renardi (Steppe viper), this protein is Basic phospholipase A2 homolog Vur-S49 analog.